The following is a 263-amino-acid chain: MVRRLLALSRPLYWLYEQRLLREVKRGPMPRHLGLILDGNRRYARALGLSPTKGHEFGVQKAYEVLEWCLEMGIKTVTVWVFSTDNFKRPPEEVETLMNLFLREAERMAEDHRILEHQVRVRFIGRREGFSPEVVRAIERLERRTEGHRGMFLNIALGYGGREEIVDAVKRLLLEAEARGLSPKEVAEGLTPEDIARHLYTAGLPDPDFIIRTSGEIRLSGFLLWQSAYSEFYFADVLWPEFRKIDFLRALRSYQARERRFGR.

Residue Asp-38 is part of the active site. Asp-38 lines the Mg(2+) pocket. Residues 39-42, His-55, and 83-85 each bind substrate; these read GNRR and STD. Asn-86 functions as the Proton acceptor in the catalytic mechanism. Substrate contacts are provided by residues Phe-87, Arg-89, Arg-212, and 218–220; that span reads RLS. Glu-231 contacts Mg(2+).

Belongs to the UPP synthase family. In terms of assembly, homodimer. Mg(2+) serves as cofactor.

Catalyzes the condensation of isopentenyl diphosphate (IPP) with allylic pyrophosphates generating different type of terpenoids. The polypeptide is Isoprenyl transferase (Thermus thermophilus (strain ATCC BAA-163 / DSM 7039 / HB27)).